Here is a 529-residue protein sequence, read N- to C-terminus: Cytochrome P450 monooxygenase 136 (529 aa).

Residues 9 to 29 (SPLALAVLSIATCQLALVWWY) traverse the membrane as a helical segment. Heme is bound at residue cysteine 447.

The protein belongs to the cytochrome P450 family. The cofactor is heme.

The protein localises to the membrane. Its pathway is secondary metabolite biosynthesis. In terms of biological role, cytochrome P450 monooxygenase that is able to use delta(6)-protoilludene as a substrate to produce delta(6)-protoilludene-5-ol. This is Cytochrome P450 monooxygenase 136 from Postia placenta (strain ATCC 44394 / Madison 698-R) (Brown rot fungus).